Here is an 895-residue protein sequence, read N- to C-terminus: Collagen alpha-1(I) chain (895 aa).

Residues Gly1–Arg895 are disordered. Residues Pro20–Met39 show a composition bias toward low complexity. The span at Asn51–Glu65 shows a compositional bias: basic and acidic residues. A Phosphoserine modification is found at Ser90. Composition is skewed to low complexity over residues Asp98–Asn114 and Pro137–Ala150. The segment covering Pro152–Phe164 has biased composition (pro residues). 6 stretches are compositionally biased toward low complexity: residues Ala198 to Ser237, Glu302 to Ala336, Lys348 to Arg374, Ala383 to Ala399, Thr553 to Ala564, and Ala575 to Ala593. Ser556 carries the post-translational modification Phosphoserine. Over residues Pro595–Pro607 the composition is skewed to pro residues. 3 stretches are compositionally biased toward low complexity: residues Ile608–Val635, Glu660–Glu669, and Ala679–Ala703. Pro residues predominate over residues Pro741–Ala751. Residues Pro753–Ser768 show a composition bias toward low complexity. Positions Ala787–Val802 are enriched in pro residues. 2 stretches are compositionally biased toward low complexity: residues Ile823–Arg838 and Pro853–Pro886.

It belongs to the fibrillar collagen family. Trimers of one alpha 2(I) and two alpha 1(I) chains. In terms of processing, prolines at the third position of the tripeptide repeating unit (G-X-Y) are hydroxylated in some or all of the chains. Forms the fibrils of tendon, ligaments and bones. In bones, the fibrils are mineralized with calcium hydroxyapatite.

It is found in the secreted. The protein resides in the extracellular space. The protein localises to the extracellular matrix. Type I collagen is a member of group I collagen (fibrillar forming collagen). In Equus sp, this protein is Collagen alpha-1(I) chain.